Reading from the N-terminus, the 217-residue chain is ATP phosphoribosyltransferase (217 aa).

Belongs to the ATP phosphoribosyltransferase family. Short subfamily. As to quaternary structure, heteromultimer composed of HisG and HisZ subunits.

The protein resides in the cytoplasm. It catalyses the reaction 1-(5-phospho-beta-D-ribosyl)-ATP + diphosphate = 5-phospho-alpha-D-ribose 1-diphosphate + ATP. It functions in the pathway amino-acid biosynthesis; L-histidine biosynthesis; L-histidine from 5-phospho-alpha-D-ribose 1-diphosphate: step 1/9. In terms of biological role, catalyzes the condensation of ATP and 5-phosphoribose 1-diphosphate to form N'-(5'-phosphoribosyl)-ATP (PR-ATP). Has a crucial role in the pathway because the rate of histidine biosynthesis seems to be controlled primarily by regulation of HisG enzymatic activity. The polypeptide is ATP phosphoribosyltransferase (Syntrophomonas wolfei subsp. wolfei (strain DSM 2245B / Goettingen)).